A 288-amino-acid polypeptide reads, in one-letter code: ATP phosphoribosyltransferase (288 aa).

This sequence belongs to the ATP phosphoribosyltransferase family. Long subfamily. Mg(2+) serves as cofactor.

It localises to the cytoplasm. It catalyses the reaction 1-(5-phospho-beta-D-ribosyl)-ATP + diphosphate = 5-phospho-alpha-D-ribose 1-diphosphate + ATP. Its pathway is amino-acid biosynthesis; L-histidine biosynthesis; L-histidine from 5-phospho-alpha-D-ribose 1-diphosphate: step 1/9. Its activity is regulated as follows. Feedback inhibited by histidine. Its function is as follows. Catalyzes the condensation of ATP and 5-phosphoribose 1-diphosphate to form N'-(5'-phosphoribosyl)-ATP (PR-ATP). Has a crucial role in the pathway because the rate of histidine biosynthesis seems to be controlled primarily by regulation of HisG enzymatic activity. This chain is ATP phosphoribosyltransferase, found in Methanococcus maripaludis (strain C7 / ATCC BAA-1331).